A 274-amino-acid polypeptide reads, in one-letter code: NH(3)-dependent NAD(+) synthetase (274 aa).

46-53 is a binding site for ATP; that stretch reads GISGGQDS. D52 provides a ligand contact to Mg(2+). R140 contributes to the deamido-NAD(+) binding site. ATP is bound at residue T160. Residue E165 participates in Mg(2+) binding. K173 and D180 together coordinate deamido-NAD(+). ATP contacts are provided by K189 and T211. 260–261 contacts deamido-NAD(+); the sequence is HK.

The protein belongs to the NAD synthetase family. Homodimer.

It carries out the reaction deamido-NAD(+) + NH4(+) + ATP = AMP + diphosphate + NAD(+) + H(+). It functions in the pathway cofactor biosynthesis; NAD(+) biosynthesis; NAD(+) from deamido-NAD(+) (ammonia route): step 1/1. Functionally, catalyzes the ATP-dependent amidation of deamido-NAD to form NAD. Uses ammonia as a nitrogen source. This Listeria monocytogenes serotype 4b (strain CLIP80459) protein is NH(3)-dependent NAD(+) synthetase.